Reading from the N-terminus, the 500-residue chain is Endonuclease domain-containing 1 protein (500 aa).

A signal peptide spans 1 to 21; it reads MGTARWLALGSLFALAGLLEG. The segment at 293–323 is disordered; it reads ERMVQSQKSSSPLSSTRSKRSTLLPPEASEG. The segment covering 297 to 317 has biased composition (low complexity); sequence QSQKSSSPLSSTRSKRSTLLP. Lys-407 bears the N6-acetyllysine mark.

This sequence belongs to the DNA/RNA non-specific endonuclease family. Interacts with RNF26; this interaction is important to modulate innate immune signaling through the cGAS-STING pathway.

The protein resides in the secreted. Functionally, may act as a DNase and a RNase. Plays a role in the modulation of innate immune signaling through the cGAS-STING pathway by interacting with RNF26. This is Endonuclease domain-containing 1 protein (ENDOD1) from Homo sapiens (Human).